Here is a 78-residue protein sequence, read N- to C-terminus: Probable [Fe-S]-dependent transcriptional repressor (78 aa).

4 residues coordinate iron-sulfur cluster: Cys-56, Cys-61, Cys-64, and Cys-70.

It belongs to the FeoC family.

Functionally, may function as a transcriptional regulator that controls feoABC expression. The sequence is that of Probable [Fe-S]-dependent transcriptional repressor from Salmonella agona (strain SL483).